Consider the following 75-residue polypeptide: Ribonuclease pancreatic (75 aa).

Disulfide bonds link Cys7-Cys65 and Cys46-Cys53. N-linked (GlcNAc...) asparagine glycosylation is present at Asn15. Substrate contacts are provided by residues 22–26 (KPVNT), Lys47, and Arg66.

Belongs to the pancreatic ribonuclease family. As to quaternary structure, monomer. Interacts with and forms tight 1:1 complexes with RNH1. Dimerization of two such complexes may occur. Interaction with RNH1 inhibits this protein. In terms of tissue distribution, pancreas.

The protein localises to the secreted. The enzyme catalyses an [RNA] containing cytidine + H2O = an [RNA]-3'-cytidine-3'-phosphate + a 5'-hydroxy-ribonucleotide-3'-[RNA].. It carries out the reaction an [RNA] containing uridine + H2O = an [RNA]-3'-uridine-3'-phosphate + a 5'-hydroxy-ribonucleotide-3'-[RNA].. Endonuclease that catalyzes the cleavage of RNA on the 3' side of pyrimidine nucleotides. Acts on single-stranded and double-stranded RNA. In Oryx leucoryx (Arabian oryx), this protein is Ribonuclease pancreatic (rnase1).